Reading from the N-terminus, the 156-residue chain is Hexachlorocyclohexane dehydrochlorinase 2 (156 aa).

Asp25 is an active-site residue. The active-site Proton acceptor is His73.

It belongs to the HCH dehydrochlorinase family. In terms of assembly, homotrimer.

It is found in the periplasm. The catalysed reaction is gamma-hexachlorocyclohexane = (3R,4S,5S,6R)-pentachlorocyclohexene + chloride + H(+). The enzyme catalyses (3R,4S,5S,6R)-pentachlorocyclohexene = (3R,6R)-1,3,4,6-tetrachlorocyclohexa-1,4-diene + chloride + H(+). It functions in the pathway xenobiotic degradation; hexachlorocyclohexane degradation. Functionally, catalyzes the conversion of the important environmental pollutant gamma-hexachlorocyclohexane (gamma-HCH or lindane) to 1,3,4,6-tetrachloro-1,4-cyclohexadiene (1,4-TCDN) via gamma-pentachlorocyclohexene (gamma-PCCH). Proceeds by two successive 1,2-anti conformationally dependent dehydrochlorinations. Also shows activity with alpha- and delta-HCH, giving alpha- and delta-PCCH respectively, but not with the beta isomer. In Sphingobium indicum (strain DSM 16412 / CCM 7286 / MTCC 6364 / B90A), this protein is Hexachlorocyclohexane dehydrochlorinase 2.